Consider the following 183-residue polypeptide: Dual-action ribosomal maturation protein DarP (183 aa).

Belongs to the DarP family.

The protein resides in the cytoplasm. Functionally, member of a network of 50S ribosomal subunit biogenesis factors which assembles along the 30S-50S interface, preventing incorrect 23S rRNA structures from forming. Promotes peptidyl transferase center (PTC) maturation. The polypeptide is Dual-action ribosomal maturation protein DarP (Escherichia coli O6:H1 (strain CFT073 / ATCC 700928 / UPEC)).